Here is a 124-residue protein sequence, read N- to C-terminus: Ribonuclease P protein component (124 aa).

This sequence belongs to the RnpA family. In terms of assembly, consists of a catalytic RNA component (M1 or rnpB) and a protein subunit.

It carries out the reaction Endonucleolytic cleavage of RNA, removing 5'-extranucleotides from tRNA precursor.. Functionally, RNaseP catalyzes the removal of the 5'-leader sequence from pre-tRNA to produce the mature 5'-terminus. It can also cleave other RNA substrates such as 4.5S RNA. The protein component plays an auxiliary but essential role in vivo by binding to the 5'-leader sequence and broadening the substrate specificity of the ribozyme. This Synechocystis sp. (strain ATCC 27184 / PCC 6803 / Kazusa) protein is Ribonuclease P protein component.